The following is a 93-amino-acid chain: Small ribosomal subunit protein uS19 (93 aa).

The protein belongs to the universal ribosomal protein uS19 family.

Protein S19 forms a complex with S13 that binds strongly to the 16S ribosomal RNA. The sequence is that of Small ribosomal subunit protein uS19 from Lawsonia intracellularis (strain PHE/MN1-00).